The following is a 358-amino-acid chain: Ferredoxin--NADP reductase (358 aa).

7 residues coordinate FAD: Asp38, Gln46, Tyr51, Val91, Phe126, Asp301, and Thr341.

It belongs to the ferredoxin--NADP reductase type 2 family. As to quaternary structure, homodimer. It depends on FAD as a cofactor.

It carries out the reaction 2 reduced [2Fe-2S]-[ferredoxin] + NADP(+) + H(+) = 2 oxidized [2Fe-2S]-[ferredoxin] + NADPH. The sequence is that of Ferredoxin--NADP reductase from Paracidovorax citrulli (strain AAC00-1) (Acidovorax citrulli).